Consider the following 468-residue polypeptide: ATP-dependent protease ATPase subunit HslU (468 aa).

ATP contacts are provided by residues Val22 and 64–69 (GVGKTE). The tract at residues 166–187 (FGNNDEEDEEPPTEDIKTKRSE) is disordered. Residues 169–178 (NDEEDEEPPT) are compositionally biased toward acidic residues. Residues Asp281, Glu346, and Arg418 each coordinate ATP.

This sequence belongs to the ClpX chaperone family. HslU subfamily. As to quaternary structure, a double ring-shaped homohexamer of HslV is capped on each side by a ring-shaped HslU homohexamer. The assembly of the HslU/HslV complex is dependent on binding of ATP.

It localises to the cytoplasm. Its function is as follows. ATPase subunit of a proteasome-like degradation complex; this subunit has chaperone activity. The binding of ATP and its subsequent hydrolysis by HslU are essential for unfolding of protein substrates subsequently hydrolyzed by HslV. HslU recognizes the N-terminal part of its protein substrates and unfolds these before they are guided to HslV for hydrolysis. This chain is ATP-dependent protease ATPase subunit HslU, found in Staphylococcus carnosus (strain TM300).